The following is a 149-amino-acid chain: Cytochrome c-type biogenesis protein CcmE (149 aa).

The Cytoplasmic segment spans residues 1–8 (MNPKRKQR). A helical; Signal-anchor for type II membrane protein transmembrane segment spans residues 9-29 (LIIVSFLVIGVSATVGLIMAA). Topologically, residues 30–149 (LSSNVNHFYN…AQDAAPAQTY (120 aa)) are periplasmic. His-124 and Tyr-128 together coordinate heme.

It belongs to the CcmE/CycJ family.

The protein resides in the cell inner membrane. In terms of biological role, heme chaperone required for the biogenesis of c-type cytochromes. Transiently binds heme delivered by CcmC and transfers the heme to apo-cytochromes in a process facilitated by CcmF and CcmH. The polypeptide is Cytochrome c-type biogenesis protein CcmE (Hahella chejuensis (strain KCTC 2396)).